We begin with the raw amino-acid sequence, 374 residues long: Translocating chain-associated membrane protein 1 (374 aa).

The Cytoplasmic segment spans residues 1 to 29 (MAIRKKSTKSPPVLSHEFVLQNHADIVSC). Residues 30 to 50 (VAMVFLLGLMFEITAKASIIF) traverse the membrane as a helical segment. Residues 51-76 (VTLQYNVTLPATEEQATESASLYYYG) are Lumenal-facing. A glycan (N-linked (GlcNAc...) asparagine) is linked at N56. A helical membrane pass occupies residues 77–97 (IKDLATVFFYMLVAIIIHAVI). Topologically, residues 98-121 (QEYMLDKINRRMHFSKTKHSKFNE) are cytoplasmic. Positions 117-326 (SKFNESGQLS…NFQLRRWREH (210 aa)) constitute a TLC domain. The helical transmembrane segment at 122 to 142 (SGQLSAFYLFACVWGTFILIS) threads the bilayer. Residues 143-159 (ENYISDPTILWRAYPHN) lie on the Lumenal side of the membrane. A helical membrane pass occupies residues 160 to 180 (LMTFQMKFFYISQLAYWLHAF). At 181–192 (PELYFQKTKRED) the chain is on the cytoplasmic side. Residues 193 to 213 (IPRQLVYIGLYLFHIAGAYLL) traverse the membrane as a helical segment. Position 214 (N214) is a topological domain, lumenal. A helical transmembrane segment spans residues 215 to 235 (LNHLGLVLLVLHYFVEFLFHI). Topologically, residues 236–251 (SRLFYFSNEKYQKGFS) are cytoplasmic. A helical membrane pass occupies residues 252-272 (LWAVLFVLGRLLTLILSVLTV). The Lumenal portion of the chain corresponds to 273–297 (GFGLARAENQKLDFSTGNFNVLAVR). Residues 298-318 (IAVLASICITQAFMVWKFINF) traverse the membrane as a helical segment. At 319–374 (QLRRWREHSAFQAPAVKKKPTVTKGRSSKKGTENGVNGTLTSNVADSPRNKKEKSS) the chain is on the cytoplasmic side. Positions 334–347 (VKKKPTVTKGRSSK) are enriched in basic residues. The disordered stretch occupies residues 334–374 (VKKKPTVTKGRSSKKGTENGVNGTLTSNVADSPRNKKEKSS). Residues 352-363 (NGVNGTLTSNVA) are compositionally biased toward polar residues. S365 bears the Phosphoserine mark.

The protein belongs to the TRAM family. Interacts with SEC61B. May interact with Derlin-1/DERL1. In terms of processing, N-glycosylated.

The protein resides in the endoplasmic reticulum membrane. Its function is as follows. Involved in the translocation of nascent protein chains into or through the endoplasmic reticulum (ER) membrane by facilitating the proper chain positioning at the SEC61 channel. Regulates the exposure of nascent secretory protein chain to the cytosol during translocation into the ER. May affect the phospholipid bilayer in the vicinity of the lateral gate of the SEC61 channel, thereby facilitating ER protein transport. Intimately associates with transmembrane (TM) domain of nascent membrane proteins during the entire integration process into the ER membrane. Associates with the second TM domain of G-protein-coupled receptor opsin/OPSD nascent chain in the ER membrane, which may facilitate its integration into the membrane. Under conditions of ER stress, participates in the disposal of misfolded ER membrane proteins during the unfolded protein response (UPR), an integrated stress response (ISR) pathway, by selectively retrotranslocating misfolded ER-membrane proteins from the ER into the cytosol where they are ubiquitinated and degraded by the proteasome. In Pongo abelii (Sumatran orangutan), this protein is Translocating chain-associated membrane protein 1 (TRAM1).